Reading from the N-terminus, the 1187-residue chain is Trafficking protein particle complex II-specific subunit 120 homolog (1187 aa).

Residues 1037-1059 (GTTAKTDSSKEPGDGSSRSADES) form a disordered region.

The protein belongs to the TRS120 family. Part of the multisubunit TRAPP (transport protein particle) II complex composed of BET3, BET5, TRS20, TRS23, TRS31, TRS33, TRS65, TRS85, TRS120 and TRS130.

It is found in the golgi apparatus. The protein resides in the trans-Golgi network. It localises to the early endosome. Its function is as follows. Specific subunit of the TRAPP II complex, a highly conserved vesicle tethering complex that is required for the proper transport of proteins in post-Golgi trafficking pathways to the growing cell plate in mitotic active cells. This Oryza sativa subsp. japonica (Rice) protein is Trafficking protein particle complex II-specific subunit 120 homolog.